Consider the following 274-residue polypeptide: MSKKAVPPIVKAQYELYNRKLNRAIKVSGSQKKLDASFVGFSESSNPETGKPHADMSMSAKVKRVNTWLKNFDREYWDNQFASKPIPRPAKQVLKGSSSKSQQRDEGEVVFTRKDSQKSVRTVSYWVCTPEKSMKPLKYKEDENVVEVTFNDLAAQKAGDKLVSILLEINVVGGAVDDKGRVAVLEKDAAVTVDYLLGSPYEAINLVSGLNKINFRSMTDVVDSIPSLLNERKVCVFQNDDSSSFYIRKWANFLQEVSAVLPVGTGKSSTIVLT.

Residues 88–113 (RPAKQVLKGSSSKSQQRDEGEVVFTR) form a disordered region. The segment covering 102-113 (QQRDEGEVVFTR) has biased composition (basic and acidic residues).

The protein resides in the virion. Functionally, capsid protein self-assembles to form a capsid about 33 nm in diameter. The capsid encapsulates two genomic RNAs as well as a third, subgenomic RNA (RNA3) (Potential). The chain is Capsid protein from Raspberry bushy dwarf virus (isolate Malling Jewel raspberry/R15) (RBDV).